The sequence spans 147 residues: uncharacterized protein (147 aa).

An HTH LytTR-type domain is found at L44–I147.

The protein resides in the cytoplasm. This is an uncharacterized protein from Staphylococcus aureus (strain MW2).